Consider the following 288-residue polypeptide: Leucine-rich repeat-containing protein 72 (288 aa).

LRR repeat units follow at residues 47-68 (DVFELFLSQKELTEVIDLSRFK), 69-90 (KLKYLWLHHNKLHGITFLTRNY), 91-112 (CLAELYLNNNAIFDIEGLHYLP), and 113-134 (SLHILLLHHNELINLDATVKEL). In terms of domain architecture, LRRCT spans 148 to 186 (NPLCQYNLYRLYIIYHLPGVELLDRNQVTEKERRSMITL).

This chain is Leucine-rich repeat-containing protein 72 (LRRC72), found in Bos taurus (Bovine).